Reading from the N-terminus, the 345-residue chain is MAEFFDTPGGIALIILAQVLAVVAFVMISLLFLVYGDRKIWAAVQMRRGPNVVGVYGLLQSVADALKYVVKEVVIPAGADRTVFILAPMTSFVLAMIAWAVIPFNDGWVLSDINVAILYVFAVSSLEVYGVIMGGWASNSKYPFLGSLRSAAQMISYEVSIGLIIIGVILSTGSMNFGDIVRAQDTGWGFFGWYWLPHFPMVFLFFISALAETNRPPFDLPEAESELVAGYQVEYSATPFLLFMAGEYIAIFLMCALTSLLFFGGWLSPIPGLPDGVLWMVAKMAFFFFIFAMVKAITPRYRYDQLMRLGWKVFLPFSLVWVVFVAFAAKFDWFWGAFARWSVGG.

8 helical membrane passes run 14–34, 84–104, 115–135, 161–181, 187–207, 248–268, 277–297, and 309–329; these read IILAQVLAVVAFVMISLLFLV, FILAPMTSFVLAMIAWAVIPF, VAILYVFAVSSLEVYGVIMGG, IGLIIIGVILSTGSMNFGDIV, GWGFFGWYWLPHFPMVFLFFI, YIAIFLMCALTSLLFFGGWLS, VLWMVAKMAFFFFIFAMVKAI, and LGWKVFLPFSLVWVVFVAFAA.

Belongs to the complex I subunit 1 family. In terms of assembly, NDH-1 is composed of 14 different subunits. Subunits NuoA, H, J, K, L, M, N constitute the membrane sector of the complex.

It is found in the cell inner membrane. The enzyme catalyses a quinone + NADH + 5 H(+)(in) = a quinol + NAD(+) + 4 H(+)(out). In terms of biological role, NDH-1 shuttles electrons from NADH, via FMN and iron-sulfur (Fe-S) centers, to quinones in the respiratory chain. The immediate electron acceptor for the enzyme in this species is believed to be ubiquinone. Couples the redox reaction to proton translocation (for every two electrons transferred, four hydrogen ions are translocated across the cytoplasmic membrane), and thus conserves the redox energy in a proton gradient. This subunit may bind ubiquinone. The protein is NADH-quinone oxidoreductase subunit H of Ruegeria pomeroyi (strain ATCC 700808 / DSM 15171 / DSS-3) (Silicibacter pomeroyi).